We begin with the raw amino-acid sequence, 196 residues long: ATP-dependent Clp protease proteolytic subunit (196 aa).

The active-site Nucleophile is S96. Residue H121 is part of the active site.

It belongs to the peptidase S14 family. Fourteen ClpP subunits assemble into 2 heptameric rings which stack back to back to give a disk-like structure with a central cavity, resembling the structure of eukaryotic proteasomes.

The protein localises to the cytoplasm. It carries out the reaction Hydrolysis of proteins to small peptides in the presence of ATP and magnesium. alpha-casein is the usual test substrate. In the absence of ATP, only oligopeptides shorter than five residues are hydrolyzed (such as succinyl-Leu-Tyr-|-NHMec, and Leu-Tyr-Leu-|-Tyr-Trp, in which cleavage of the -Tyr-|-Leu- and -Tyr-|-Trp bonds also occurs).. In terms of biological role, cleaves peptides in various proteins in a process that requires ATP hydrolysis. Has a chymotrypsin-like activity. Plays a major role in the degradation of misfolded proteins. This chain is ATP-dependent Clp protease proteolytic subunit, found in Streptococcus agalactiae serotype III (strain NEM316).